Reading from the N-terminus, the 138-residue chain is Small ribosomal subunit protein uS8c (138 aa).

Belongs to the universal ribosomal protein uS8 family. Part of the 30S ribosomal subunit.

The protein resides in the plastid. Its subcellular location is the chloroplast. Functionally, one of the primary rRNA binding proteins, it binds directly to 16S rRNA central domain where it helps coordinate assembly of the platform of the 30S subunit. The chain is Small ribosomal subunit protein uS8c (rps8) from Oenothera elata subsp. hookeri (Hooker's evening primrose).